The sequence spans 1218 residues: Structural maintenance of chromosomes protein 2 (1218 aa).

Residue 32 to 39 (GLNGSGKS) coordinates ATP. Residues 209–517 (VKLKKEKEEY…INSVKIDYKI (309 aa)) adopt a coiled-coil conformation. The SMC hinge domain maps to 525 to 654 (DVLGQIYKLI…CSNVDLCKKI (130 aa)). Coiled-coil stretches lie at residues 693–949 (LNYE…DTVK) and 978–1045 (RHDV…KKSE).

This sequence belongs to the SMC family. SMC2 subfamily.

It localises to the nucleus. Functionally, may play a role in the conversion of interphase chromatin into condensed chromosomes. The polypeptide is Structural maintenance of chromosomes protein 2 (Plasmodium falciparum (isolate 3D7)).